Reading from the N-terminus, the 250-residue chain is 3-deoxy-manno-octulosonate cytidylyltransferase (250 aa).

The protein belongs to the KdsB family.

The protein localises to the cytoplasm. The catalysed reaction is 3-deoxy-alpha-D-manno-oct-2-ulosonate + CTP = CMP-3-deoxy-beta-D-manno-octulosonate + diphosphate. It participates in nucleotide-sugar biosynthesis; CMP-3-deoxy-D-manno-octulosonate biosynthesis; CMP-3-deoxy-D-manno-octulosonate from 3-deoxy-D-manno-octulosonate and CTP: step 1/1. The protein operates within bacterial outer membrane biogenesis; lipopolysaccharide biosynthesis. Activates KDO (a required 8-carbon sugar) for incorporation into bacterial lipopolysaccharide in Gram-negative bacteria. This chain is 3-deoxy-manno-octulosonate cytidylyltransferase, found in Legionella pneumophila (strain Corby).